The primary structure comprises 78 residues: UPF0270 protein PC1_3850 (78 aa).

It belongs to the UPF0270 family.

The sequence is that of UPF0270 protein PC1_3850 from Pectobacterium carotovorum subsp. carotovorum (strain PC1).